A 664-amino-acid chain; its full sequence is Cytoskeleton-associated protein 2 (664 aa).

The interval 1 to 38 is disordered; that stretch reads MAESRKRFLGRAARNPLPVTRDLQLPPTRRDQPAFREQ. The span at 28–38 shows a compositional bias: basic and acidic residues; it reads TRRDQPAFREQ. Residues 160–319 are association with alpha- and beta-tubulin; that stretch reads PKQDSNVSKK…ASKDAARTDS (160 aa). Serine 186 carries the post-translational modification Phosphoserine. Disordered stretches follow at residues 254–273, 283–328, 366–393, and 512–545; these read IRSLHSSSHGAAKQGLSRPL, LDKE…MVKP, GKGKGLKRPPHSVVTQAEPKGQSENPVG, and AHATKEPIQEVNADANVGSGKPGEENEHHGKVEV. Residues 300-309 are compositionally biased toward polar residues; that stretch reads GSSQAPSRSI. Basic residues predominate over residues 366–375; that stretch reads GKGKGLKRPP. The segment covering 533-545 has biased composition (basic and acidic residues); it reads PGEENEHHGKVEV. Phosphothreonine is present on threonine 561. Serine 577 is modified (phosphoserine). Residue threonine 579 is modified to Phosphothreonine. Position 584 is a phosphoserine (serine 584).

Belongs to the CKAP2 family. In terms of assembly, associates with alpha- and beta-tubulins.

The protein resides in the cytoplasm. Its subcellular location is the cytoskeleton. The protein localises to the spindle. It localises to the spindle pole. Possesses microtubule stabilizing properties. Involved in regulating aneuploidy, cell cycling, and cell death in a p53-dependent manner. The protein is Cytoskeleton-associated protein 2 of Mus musculus (Mouse).